The sequence spans 236 residues: Small ribosomal subunit protein uS2c (236 aa).

It belongs to the universal ribosomal protein uS2 family.

The protein localises to the plastid. The protein resides in the chloroplast. This is Small ribosomal subunit protein uS2c (rps2) from Vitis vinifera (Grape).